A 436-amino-acid polypeptide reads, in one-letter code: Hydrogenobyrinate a,c-diamide synthase (436 aa).

A GATase cobBQ-type domain is found at 244–435 (RIAVARDDAF…MHVIDFSGEA (192 aa)). Cys-327 functions as the Nucleophile in the catalytic mechanism.

This sequence belongs to the CobB/CbiA family. Mg(2+) serves as cofactor.

It catalyses the reaction hydrogenobyrinate + 2 L-glutamine + 2 ATP + 2 H2O = hydrogenobyrinate a,c-diamide + 2 L-glutamate + 2 ADP + 2 phosphate + 2 H(+). The protein operates within cofactor biosynthesis; adenosylcobalamin biosynthesis; cob(II)yrinate a,c-diamide from precorrin-2 (aerobic route): step 9/10. Functionally, catalyzes the ATP-dependent amidation of the two carboxylate groups at positions a and c of hydrogenobyrinate, using either L-glutamine or ammonia as the nitrogen source. This Brucella abortus biovar 1 (strain 9-941) protein is Hydrogenobyrinate a,c-diamide synthase.